Consider the following 201-residue polypeptide: CASP-like protein 1F2 (201 aa).

Over methionine 1–arginine 29 the chain is Cytoplasmic. The chain crosses the membrane as a helical span at residues isoleucine 30–isoleucine 50. Over serine 51–arginine 78 the chain is Extracellular. A helical transmembrane segment spans residues phenylalanine 79–cysteine 99. The Cytoplasmic portion of the chain corresponds to leucine 100 to aspartate 119. A helical membrane pass occupies residues methionine 120 to glycine 140. Residues arginine 141–glutamine 162 lie on the Extracellular side of the membrane. A helical transmembrane segment spans residues alanine 163–leucine 183. The Cytoplasmic segment spans residues alanine 184 to glutamate 201.

Belongs to the Casparian strip membrane proteins (CASP) family. As to quaternary structure, homodimer and heterodimers.

It is found in the cell membrane. The polypeptide is CASP-like protein 1F2 (Ricinus communis (Castor bean)).